Here is a 297-residue protein sequence, read N- to C-terminus: 2-dehydropantoate 2-reductase (297 aa).

NADP(+)-binding positions include 11 to 16, Asn107, and Ala133; that span reads GAGAMG. Asn107 contacts substrate. Lys187 (proton donor) is an active-site residue. Residues Asn191, Asn195, Asn205, and Ser251 each coordinate substrate. An NADP(+)-binding site is contributed by Glu263.

The protein belongs to the ketopantoate reductase family.

Its subcellular location is the cytoplasm. It carries out the reaction (R)-pantoate + NADP(+) = 2-dehydropantoate + NADPH + H(+). The protein operates within cofactor biosynthesis; (R)-pantothenate biosynthesis; (R)-pantoate from 3-methyl-2-oxobutanoate: step 2/2. Catalyzes the NADPH-dependent reduction of ketopantoate into pantoic acid. This is 2-dehydropantoate 2-reductase from Listeria monocytogenes serovar 1/2a (strain ATCC BAA-679 / EGD-e).